Reading from the N-terminus, the 881-residue chain is Receptor-like protein 41 (881 aa).

An N-terminal signal peptide occupies residues 1–21 (MSELLLRLNFLLLLLLSCVSP). The Extracellular portion of the chain corresponds to 22 to 844 (SSFVTFNNPV…EEQEQVLNWE (823 aa)). Asn-58, Asn-70, Asn-91, Asn-109, and Asn-145 each carry an N-linked (GlcNAc...) asparagine glycan. 16 LRR repeats span residues 97–121 (FHEL…KFGM), 122–145 (LNKL…SFSN), 146–169 (LSML…VRNL), 170–195 (RKLR…LFEL), 197–219 (HLTY…EFGN), 220–244 (LNKL…ISNL), 245–267 (TQLT…VQNL), 268–291 (TKLS…LFTM), 293–317 (FLSY…SSSS), 319–340 (LESL…ISKL), 342–364 (NLKE…LFSS), 365–390 (FKSL…SYIS), 391–412 (LTLE…ILKS), 413–437 (LPNL…LWSL), 439–462 (RLSS…ILVN), and 463–486 (SSVQ…PLSI). A glycan (N-linked (GlcNAc...) asparagine) is linked at Asn-189. N-linked (GlcNAc...) asparagine glycans are attached at residues Asn-243 and Asn-266. Residues Asn-305 and Asn-312 are each glycosylated (N-linked (GlcNAc...) asparagine). An N-linked (GlcNAc...) asparagine glycan is attached at Asn-402. N-linked (GlcNAc...) asparagine glycosylation is present at Asn-462. One copy of the LRR 17; degenerate repeat lies at 487-506 (IYFSARYNRFKGDIPLSICN). Residues Asn-506 and Asn-519 are each glycosylated (N-linked (GlcNAc...) asparagine). LRR repeat units lie at residues 507–528 (RSSL…PPCL), 529–552 (SNLL…YFAD), 554–576 (PLRS…LLNC), 578–599 (ALQF…YLKV), 600–624 (LPKL…NQGS), 627–651 (FPEL…FFVN), 701–724 (TSSA…IGLL), 725–748 (KALI…LANL), 749–772 (VKIE…LGTL), and 774–797 (FLAY…QITG). Asn-575 carries N-linked (GlcNAc...) asparagine glycosylation. N-linked (GlcNAc...) asparagine glycosylation is present at Asn-731. Asn-779 carries an N-linked (GlcNAc...) asparagine glycan. A helical transmembrane segment spans residues 845 to 865 (GVAIGYGVGVLLGLAIAQLIA). At 866 to 881 (SYKPEWLACLIKSRNR) the chain is on the cytoplasmic side.

The protein belongs to the RLP family.

It is found in the cell membrane. Functionally, may be involved in ABA-induced senescence responses. The sequence is that of Receptor-like protein 41 from Arabidopsis thaliana (Mouse-ear cress).